The chain runs to 570 residues: Serine/threonine-protein kinase STY17 (570 aa).

The disordered stretch occupies residues 112–145 (LNGNSGDVDPSDPAVNEDAQSSYNSRSLAPPTFG). Over residues 129-145 (DAQSSYNSRSLAPPTFG) the composition is skewed to polar residues. Residues 180 to 260 (EITFSTIDRP…PCSKQKSITF (81 aa)) form the ACT domain. The region spanning 292-545 (LKIEKKVACG…EIIEMLNQLI (254 aa)) is the Protein kinase domain. ATP is bound by residues 298 to 306 (VACGSYGEL) and K319. D413 functions as the Proton acceptor in the catalytic mechanism. Phosphoserine is present on S441. T445 carries the phosphothreonine modification.

This sequence belongs to the protein kinase superfamily. Ser/Thr protein kinase family. In terms of processing, autophosphorylated on serine and threonine residues. Autophosphorylated at Thr-445.

The protein localises to the cytoplasm. It is found in the cytosol. It carries out the reaction L-seryl-[protein] + ATP = O-phospho-L-seryl-[protein] + ADP + H(+). The catalysed reaction is L-threonyl-[protein] + ATP = O-phospho-L-threonyl-[protein] + ADP + H(+). Activated by autophosphorylation at Thr-445. Serine/threonine protein kinase that specifically phosphorylates chloroplast precursor proteins in the cytosol within the cleavable presequences (transit peptides). May be part of a cytosolic regulatory network involved in chloroplast protein import. Does not phosphorylate mitochondrion precursor proteins. Specific for ATP and does not utilize other NTPs. Plays a role in chloroplast biogenesis and differentiation in cotyledons, possibly through phosphorylation of chloroplast preproteins. The protein is Serine/threonine-protein kinase STY17 of Arabidopsis thaliana (Mouse-ear cress).